The primary structure comprises 119 residues: MARVTVEDCVEKVPNRFALVLLSAHRARGISAGAALMVDRDNDKNPVVALREIADDVIDHEGLKEHLISTLQRVDEHTEAEEEAETLALLADPSHMQMSELELVRALQSDRDGGQEERY.

It belongs to the RNA polymerase subunit omega family. The RNAP catalytic core consists of 2 alpha, 1 beta, 1 beta' and 1 omega subunit. When a sigma factor is associated with the core the holoenzyme is formed, which can initiate transcription.

It carries out the reaction RNA(n) + a ribonucleoside 5'-triphosphate = RNA(n+1) + diphosphate. Its function is as follows. Promotes RNA polymerase assembly. Latches the N- and C-terminal regions of the beta' subunit thereby facilitating its interaction with the beta and alpha subunits. In Caulobacter vibrioides (strain ATCC 19089 / CIP 103742 / CB 15) (Caulobacter crescentus), this protein is DNA-directed RNA polymerase subunit omega (rpoZ).